Reading from the N-terminus, the 200-residue chain is 3-isopropylmalate dehydratase small subunit (200 aa).

This sequence belongs to the LeuD family. LeuD type 1 subfamily. Heterodimer of LeuC and LeuD.

The enzyme catalyses (2R,3S)-3-isopropylmalate = (2S)-2-isopropylmalate. It participates in amino-acid biosynthesis; L-leucine biosynthesis; L-leucine from 3-methyl-2-oxobutanoate: step 2/4. Its function is as follows. Catalyzes the isomerization between 2-isopropylmalate and 3-isopropylmalate, via the formation of 2-isopropylmaleate. This Actinobacillus succinogenes (strain ATCC 55618 / DSM 22257 / CCUG 43843 / 130Z) protein is 3-isopropylmalate dehydratase small subunit.